Reading from the N-terminus, the 121-residue chain is Natriuretic peptides B (121 aa).

The N-terminal stretch at 1–26 (MDLLKVLSQMILFLLFLYLSPLGGHS) is a signal peptide. The tract at residues 61 to 89 (LKDQGLTKEHPKRVLRSQGSTLRVQQRPQ) is disordered. Polar residues predominate over residues 77–89 (SQGSTLRVQQRPQ). Cysteines 99 and 115 form a disulfide.

The protein belongs to the natriuretic peptide family. Post-translationally, the precursor molecule is proteolytically cleaved by the endoprotease Furin to produce brain natriuretic peptide 45. May undergo further proteolytic cleavage by various proteases such as DPP4, MME and possibly FAP, to give rise to a variety of shorter peptides. May be cleaved at Ser-91 by the prolyl endopeptidase FAP (seprase) activity (in vitro). May be degraded by IDE. During IDE degradation, the resulting products initially increase the activation of NPR1 and can also stimulate NPR2 to produce cGMP before the fragments are completely degraded and inactivated by IDE (in vitro). Expressed abundantly in the ventricle, and in a lesser extent in the atrium (at protein level).

The protein localises to the secreted. Its function is as follows. Cardiac hormone that plays a key role in mediating cardio-renal homeostasis. May also function as a paracrine antifibrotic factor in the heart. Acts by specifically binding and stimulating NPR1 to produce cGMP, which in turn activates effector proteins that drive various biological responses. Likely involved in regulating the extracellular fluid volume and maintaining the fluid-electrolyte balance through natriuresis, diuresis, kaluresis and chloruresis. The sequence is that of Natriuretic peptides B (Nppb) from Mus musculus (Mouse).